The chain runs to 907 residues: MPTAAAPIISSVQKLVLYETRARYFLVGSNHAETKYRVLKIDRTEPKDLVVIDDRHVYTQQEVRELLGRLDLGNRTKMSQKGSSGLFRAVSAFGVVGFVRFLEGYYIVLITKRRKMADIGGHAIYKIEDTSMIYIPNDSVRISHPDEARYLRIFQNVDLSSNFYFSYSYDLSHSLQYNLTVLRMPLEMLKSETSKACQESFDIFEDEGLITQGGSGVFGISSEPYMKYVWNGELLDIIKNTVHRDWLLYIIHGFCGQSKLLIYGRPVYVTLIARRSSRFAGTRFLKRGANCEGDVANEVETEQILCDASVMSFTAGSYSSYVQVRGSVPLFWSQDISTMMPKPPITLDQADPFAHVAALHFDQMLQRFGSPIIILNLVKEREKRKHERILSEELVAAVTYLNQFLPPEHTIVYIPWDMAKYTKSKLCNVLDRLNVIAESVVKKTGFFVNRPDSYCSILRPDEKWNELGGHVIPTGRLQTGILRTNCVDCLDRTNTAQFMVGKCALAYQLYSLGLIDKPNLQFDTDAVRLFEELYEDHGDTLSLQYGGSQLVHRVKTYRKIAPWTQHSKDIMQTLSRYYSNAFSDADRQDSINLFLGVFHPTEGKPHLWELPTDFYLHHKNTMSLLPPRRSYTYWWTPEVVKHLPLPYDEVICAANLKKLMVKKFHRWEEEIDIHNEFFRPYELSSFDDTFCLAMTSSARDFMPKTVGIDPSPFTVRKPDETGKSVLGNKNTREEAVLQRKTAASAPPPPSEEAVSSSSEDDSGTDREDEGSISQRSTPVKMTDTGDSAKATENVVQPMKEVYGVSLSSSLSEEDHSIYARFVQLGQSQHKQDRGNQQLCSRCSDGVIKLTPISAFSQDNIYEVQPPRVDRKSTEIFQAHIQASQGIMQPLGKEDTAMYREYIRNRYL.

The region spanning 154–547 is the SAC domain; it reads FQNVDLSSNF…GDTLSLQYGG (394 aa). The segment at 707–790 is disordered; that stretch reads GIDPSPFTVR…MTDTGDSAKA (84 aa). Acidic residues predominate over residues 758–770; sequence SEDDSGTDREDEG.

Component of the PI(3,5)P2 regulatory complex/PAS complex, at least composed of PIKFYVE, FIG4 and VAC14. VAC14 nucleates the assembly of the complex and serves as a scaffold by pentamerizing into a star-shaped structure, which can bind a single copy each of PIKFYVE and FIG4 and coordinates their activities. Wide-spread.

The protein localises to the endosome membrane. It carries out the reaction a 1,2-diacyl-sn-glycero-3-phospho-(1D-myo-inositol-3,5-bisphosphate) + H2O = a 1,2-diacyl-sn-glycero-3-phospho-(1D-myo-inositol-3-phosphate) + phosphate. The catalysed reaction is a 1,2-diacyl-sn-glycero-3-phospho-(1D-myo-inositol-4,5-bisphosphate) + H2O = a 1,2-diacyl-sn-glycero-3-phospho-(1D-myo-inositol 4-phosphate) + phosphate. The enzyme catalyses a 1,2-diacyl-sn-glycero-3-phospho-(1D-myo-inositol-3,4,5-trisphosphate) + H2O = a 1,2-diacyl-sn-glycero-3-phospho-(1D-myo-inositol-3,4-bisphosphate) + phosphate. It catalyses the reaction O-phospho-L-seryl-[protein] + H2O = L-seryl-[protein] + phosphate. Functionally, the PI(3,5)P2 regulatory complex regulates both the synthesis and turnover of phosphatidylinositol 3,5-bisphosphate (PtdIns(3,5)P2). In vitro, hydrolyzes all three D5-phosphorylated polyphosphoinositide substrates in the order PtdIns(4,5)P2 &gt; PtdIns(3,5)P2 &gt; PtdIns(3,4,5)P3. Plays a role in the biogenesis of endosome carrier vesicles (ECV) / multivesicular bodies (MVB) transport intermediates from early endosomes. Dual specificity phosphatase component of the PI(3,5)P2 regulatory complex which regulates both the synthesis and turnover of phosphatidylinositol 3,5-bisphosphate (PtdIns(3,5)P2). Catalyzes the dephosphorylation of phosphatidylinositol 3,5-bisphosphate (PtdIns(3,5)P2) to form phosphatidylinositol 3-phosphate. Has serine-protein phosphatase activity acting on PIKfyve to stimulate its lipid kinase activity, its catalytically activity being required for maximal PI(3,5)P2 production. In vitro, hydrolyzes all three D5-phosphorylated polyphosphoinositide and although displaying preferences for PtdIns(3,5)P2, it is capable of hydrolyzing PtdIns(3,4,5)P3 and PtdIns(4,5)P2, at least in vitro. The protein is Polyphosphoinositide phosphatase (Fig4) of Mus musculus (Mouse).